The chain runs to 595 residues: UvrABC system protein C (595 aa).

The GIY-YIG domain maps to Asn14–Ile91. In terms of domain architecture, UVR spans Asp196–Leu231.

It belongs to the UvrC family. As to quaternary structure, interacts with UvrB in an incision complex.

The protein resides in the cytoplasm. The UvrABC repair system catalyzes the recognition and processing of DNA lesions. UvrC both incises the 5' and 3' sides of the lesion. The N-terminal half is responsible for the 3' incision and the C-terminal half is responsible for the 5' incision. The sequence is that of UvrABC system protein C from Streptococcus thermophilus (strain ATCC BAA-250 / LMG 18311).